We begin with the raw amino-acid sequence, 148 residues long: Arginine repressor (148 aa).

Belongs to the ArgR family.

Its subcellular location is the cytoplasm. Its pathway is amino-acid biosynthesis; L-arginine biosynthesis [regulation]. Regulates arginine biosynthesis genes. The protein is Arginine repressor of Koribacter versatilis (strain Ellin345).